We begin with the raw amino-acid sequence, 114 residues long: Large ribosomal subunit protein uL22 (114 aa).

The protein belongs to the universal ribosomal protein uL22 family. In terms of assembly, part of the 50S ribosomal subunit.

Functionally, this protein binds specifically to 23S rRNA; its binding is stimulated by other ribosomal proteins, e.g. L4, L17, and L20. It is important during the early stages of 50S assembly. It makes multiple contacts with different domains of the 23S rRNA in the assembled 50S subunit and ribosome. The globular domain of the protein is located near the polypeptide exit tunnel on the outside of the subunit, while an extended beta-hairpin is found that lines the wall of the exit tunnel in the center of the 70S ribosome. The chain is Large ribosomal subunit protein uL22 from Bacillus licheniformis (strain ATCC 14580 / DSM 13 / JCM 2505 / CCUG 7422 / NBRC 12200 / NCIMB 9375 / NCTC 10341 / NRRL NRS-1264 / Gibson 46).